Consider the following 379-residue polypeptide: Oxidized polyvinyl alcohol hydrolase (379 aa).

The first 23 residues, 1–23 (MNQSLGVLRLTRGVIALALASVA), serve as a signal peptide directing secretion. Residues S203 and S309 each act as charge relay system in the active site.

The protein belongs to the peptidase S9A family. As to quaternary structure, monomer.

The catalysed reaction is nonane-4,6-dione + H2O = pentan-2-one + butanoate + H(+). In terms of biological role, catalyzes the hydrolysis of 4,6-nonanedione, a beta-diketone compound. Also mediates hydrolysis of oxidized polyvinyl alcohol (PVA) in the second step in the degradation of polyvinyl alcohol. Not active toward the monoketone structure. This Pseudomonas sp protein is Oxidized polyvinyl alcohol hydrolase (pvaB).